Reading from the N-terminus, the 962-residue chain is Protein lin-36 (962 aa).

2 disordered regions span residues 1–53 and 74–99; these read MSEE…ETEG and TSSGEVLDESQVTPTKQASSSQPREE. The span at 23 to 40 shows a compositional bias: basic and acidic residues; sequence DSHVTVHSVEQDSQHSGE. The segment covering 74 to 95 has biased composition (polar residues); the sequence is TSSGEVLDESQVTPTKQASSSQ. The THAP-type zinc finger occupies 161-249; it reads LTHKPCTVCN…IEAFGVPVAI (89 aa). Composition is skewed to basic and acidic residues over residues 452-472 and 534-570; these read KAEESAQGTKEQESSQKKHAE and SHEEEHDPTPESVEREPTVSPNDPRERLRLKERDEQF. 4 disordered regions span residues 452 to 575, 612 to 676, 744 to 788, and 932 to 962; these read KAEE…KMVQ, IAAT…PEER, QEKG…SASS, and DPKWRELQQQQQQQQQQQEQFPGQGSSDSQQ. Positions 626–637 are enriched in low complexity; the sequence is SSEQTPEPTTSQ. The segment covering 647–658 has biased composition (basic and acidic residues); it reads KTKESAVQKVEK. Positions 939-951 are enriched in low complexity; it reads QQQQQQQQQQQEQ. The segment covering 952-962 has biased composition (polar residues); that stretch reads FPGQGSSDSQQ.

As to expression, expressed in vulval precursor P(3-8).p cells and their descendants, neurons of the head, tail and ventral cord, hypodermal and intestinal cells and germline cells.

It is found in the nucleus. Its function is as follows. Required to negatively regulate vulval development. Antagonizes Ras-mediated vulval induction. Acts cell autonomously. The chain is Protein lin-36 (lin-36) from Caenorhabditis elegans.